Consider the following 266-residue polypeptide: Tryptophan synthase alpha chain (266 aa).

Residues Glu-49 and Asp-60 each act as proton acceptor in the active site.

The protein belongs to the TrpA family. As to quaternary structure, tetramer of two alpha and two beta chains.

The enzyme catalyses (1S,2R)-1-C-(indol-3-yl)glycerol 3-phosphate + L-serine = D-glyceraldehyde 3-phosphate + L-tryptophan + H2O. The protein operates within amino-acid biosynthesis; L-tryptophan biosynthesis; L-tryptophan from chorismate: step 5/5. Its function is as follows. The alpha subunit is responsible for the aldol cleavage of indoleglycerol phosphate to indole and glyceraldehyde 3-phosphate. In Synechococcus elongatus (strain ATCC 33912 / PCC 7942 / FACHB-805) (Anacystis nidulans R2), this protein is Tryptophan synthase alpha chain.